Consider the following 486-residue polypeptide: Galactose-1-phosphate uridylyltransferase (486 aa).

It belongs to the galactose-1-phosphate uridylyltransferase type 2 family.

The protein localises to the cytoplasm. The catalysed reaction is alpha-D-galactose 1-phosphate + UDP-alpha-D-glucose = alpha-D-glucose 1-phosphate + UDP-alpha-D-galactose. Its pathway is carbohydrate metabolism; galactose metabolism. The protein is Galactose-1-phosphate uridylyltransferase of Lacticaseibacillus casei (strain BL23) (Lactobacillus casei).